A 347-amino-acid chain; its full sequence is Isopentenyl-diphosphate delta-isomerase (347 aa).

5–6 (RK) contacts substrate. Residues S61, 62-64 (SMT), S92, and N120 contribute to the FMN site. 92-94 (SMR) serves as a coordination point for substrate. Q159 lines the substrate pocket. E160 provides a ligand contact to Mg(2+). Residues K189, S214, T219, 269–271 (GLR), and 290–291 (AR) each bind FMN.

This sequence belongs to the IPP isomerase type 2 family. In terms of assembly, homooctamer. Dimer of tetramers. It depends on FMN as a cofactor. NADPH serves as cofactor. Mg(2+) is required as a cofactor.

The protein localises to the cytoplasm. The enzyme catalyses isopentenyl diphosphate = dimethylallyl diphosphate. Functionally, involved in the biosynthesis of isoprenoids. Catalyzes the 1,3-allylic rearrangement of the homoallylic substrate isopentenyl (IPP) to its allylic isomer, dimethylallyl diphosphate (DMAPP). The protein is Isopentenyl-diphosphate delta-isomerase of Thermoplasma volcanium (strain ATCC 51530 / DSM 4299 / JCM 9571 / NBRC 15438 / GSS1).